We begin with the raw amino-acid sequence, 378 residues long: Metacaspase-1B (378 aa).

Residues 1–70 are disordered; the sequence is MCSPPPYPPQ…QEAQSFGGGA (70 aa). Residues 10–29 are compositionally biased toward low complexity; sequence QGHHYPPSPHGSYYSPTPYG. Catalysis depends on residues His-169 and Cys-225.

It belongs to the peptidase C14B family.

In terms of biological role, involved in cell death (apoptosis). The protein is Metacaspase-1B (casB) of Aspergillus terreus (strain NIH 2624 / FGSC A1156).